The primary structure comprises 121 residues: MADTKPAAEQSGTYAIVEASGTQIWLQPNRYYDIDRLQAEVDDTIKLENVLLVKDGKGTTLGQPYVKDATVSLKVMAHRRGPKVIVYKMRPKKKTRRKNGHRQELTRVMVESISVGGKAIS.

The protein belongs to the bacterial ribosomal protein bL21 family. As to quaternary structure, part of the 50S ribosomal subunit. Contacts protein L20.

In terms of biological role, this protein binds to 23S rRNA in the presence of protein L20. This chain is Large ribosomal subunit protein bL21, found in Synechococcus sp. (strain CC9605).